The following is a 196-amino-acid chain: Probable malonic semialdehyde reductase RutE (196 aa).

Belongs to the nitroreductase family. HadB/RutE subfamily. It depends on FMN as a cofactor.

The enzyme catalyses 3-hydroxypropanoate + NADP(+) = 3-oxopropanoate + NADPH + H(+). Its function is as follows. May reduce toxic product malonic semialdehyde to 3-hydroxypropionic acid, which is excreted. This chain is Probable malonic semialdehyde reductase RutE, found in Escherichia coli O6:H1 (strain CFT073 / ATCC 700928 / UPEC).